Reading from the N-terminus, the 215-residue chain is MSKVYDWFEERLEIQAIADDITSKYVPPHVNIFYCLGGITLTCFLVQIATGFAMTFYYRPTVTEAFSSVQYIMTEVNFGWLIRSVHRWSASMMVLVMILHVFRVYLTGGFKKPRELTWVTGVILAVLTVSFGVTGYSLPWDQIGYWAVKIVTGVPEAIPFIGSSLVELLRGSVSVGQSTLTRFYSLHTFVLPLLTAVFMLMHFLMIRKQGISGPL.

A helical membrane pass occupies residues 32-52 (IFYCLGGITLTCFLVQIATGF). Cys-35 provides a ligand contact to heme c. Residues His-86 and His-100 each contribute to the heme b site. A run of 3 helical transmembrane segments spans residues 90 to 110 (ASMMVLVMILHVFRVYLTGGF), 116 to 136 (LTWVTGVILAVLTVSFGVTGY), and 186 to 206 (LHTFVLPLLTAVFMLMHFLMI). His-187 and His-202 together coordinate heme b.

Belongs to the cytochrome b family. PetB subfamily. In terms of assembly, the 4 large subunits of the cytochrome b6-f complex are cytochrome b6, subunit IV (17 kDa polypeptide, PetD), cytochrome f and the Rieske protein, while the 4 small subunits are PetG, PetL, PetM and PetN. The complex functions as a dimer. Heme b is required as a cofactor. The cofactor is heme c.

Its subcellular location is the plastid. The protein resides in the chloroplast thylakoid membrane. Functionally, component of the cytochrome b6-f complex, which mediates electron transfer between photosystem II (PSII) and photosystem I (PSI), cyclic electron flow around PSI, and state transitions. This is Cytochrome b6 from Adiantum capillus-veneris (Maidenhair fern).